The following is a 75-amino-acid chain: Serine rich endogenous peptide 4 (75 aa).

Positions 1–31 are cleaved as a signal peptide; it reads MATKTSNLGHLLLSLFILLLFILSQVGVAQA. Residues 51–75 are disordered; it reads PPPLRGIVKPPIASFHSASPKDKGP. Positions 61 to 75 match the SCOOP motif motif; sequence PIASFHSASPKDKGP. Positions 67–69 match the SxS motif essential for MIK2 binding motif; sequence SAS.

It belongs to the serine rich endogenous peptide (SCOOP) phytocytokine family. As to quaternary structure, interacts with MIK2 (via extracellular leucine-rich repeat domain); this interaction triggers the formation of complex between MIK2 and the BAK1/SERK3 and SERK4 coreceptors, and subsequent BAK1 activation by phosphorylation. Mostly expressed in leaves and seedlings shoots, and, to a lower extent, in roots, stems, siliques, seeds and flowers.

It is found in the cell membrane. It localises to the secreted. Its subcellular location is the extracellular space. The protein resides in the apoplast. Brassicaceae-specific phytocytokine (plant endogenous peptide released into the apoplast) perceived by MIK2 in a BAK1/SERK3 and SERK4 coreceptors-dependent manner, that modulates various physiological and antimicrobial processes including growth prevention and reactive oxygen species (ROS) response regulation. Inhibits root growth. Prevents general growth and development. Exhibits antibacterial effects against Pseudomonas syringae pv. tomato DC3000, Ralstonia solanacearum, Bacillus subtilis and Agrobacterium tumefaciens, thus being an antimicrobial peptide (AMP). The chain is Serine rich endogenous peptide 4 from Arabidopsis thaliana (Mouse-ear cress).